A 71-amino-acid polypeptide reads, in one-letter code: UPF0346 protein BCE_2336 (71 aa).

It belongs to the UPF0346 family.

This is UPF0346 protein BCE_2336 from Bacillus cereus (strain ATCC 10987 / NRS 248).